Reading from the N-terminus, the 338-residue chain is Alcohol dehydrogenase (338 aa).

Zn(2+) is bound by residues cysteine 38, histidine 61, glutamate 62, cysteine 92, cysteine 95, cysteine 98, cysteine 106, and cysteine 148.

This sequence belongs to the zinc-containing alcohol dehydrogenase family. As to quaternary structure, homotetramer. Zn(2+) serves as cofactor.

It carries out the reaction a primary alcohol + NAD(+) = an aldehyde + NADH + H(+). It catalyses the reaction a secondary alcohol + NAD(+) = a ketone + NADH + H(+). The catalysed reaction is ethanol + NAD(+) = acetaldehyde + NADH + H(+). The enzyme catalyses 1-propanol + NAD(+) = propanal + NADH + H(+). It carries out the reaction butan-1-ol + NAD(+) = butanal + NADH + H(+). It catalyses the reaction propan-2-ol + NAD(+) = acetone + NADH + H(+). Its function is as follows. Psychrophilic alcohol dehydrogenase that exhibits a wide range of substrate specificity, oxidizing mainly primary and secondary aliphatic alcohols, utilizing NAD(+) as a cosubstrate. In vitro, shows highest reaction rates for ethanol as a substrate and gradually decreases its reaction rates as the length and branching of the carbon chain of the alcohol substrates increase. To a lesser extent, is also able to reduce aldehydes and ketones. Do not catalyze the further oxidation of aldehydes to carboxylic acids. Cannot use NADP(+) instead of NAD(+). This Moraxella sp. (strain TAE123) protein is Alcohol dehydrogenase.